A 134-amino-acid polypeptide reads, in one-letter code: Methylglyoxal synthase (134 aa).

Residues 1-134 form the MGS-like domain; that stretch reads MHIALIAHDE…DWRDLRRNDE (134 aa). Substrate is bound by residues His8, Lys12, 34–37, and 54–55; these read TGTT and SG. Asp60 acts as the Proton donor/acceptor in catalysis. Position 87 (His87) interacts with substrate.

Belongs to the methylglyoxal synthase family.

It catalyses the reaction dihydroxyacetone phosphate = methylglyoxal + phosphate. Its function is as follows. Catalyzes the formation of methylglyoxal from dihydroxyacetone phosphate. This chain is Methylglyoxal synthase, found in Listeria welshimeri serovar 6b (strain ATCC 35897 / DSM 20650 / CCUG 15529 / CIP 8149 / NCTC 11857 / SLCC 5334 / V8).